Here is a 70-residue protein sequence, read N- to C-terminus: Beta-insect excitatory toxin LqqIT1 (70 aa).

Positions lysine 2–aspartate 65 constitute an LCN-type CS-alpha/beta domain. Cystine bridges form between cysteine 16/cysteine 37, cysteine 22/cysteine 42, cysteine 26/cysteine 44, and cysteine 38/cysteine 64.

The protein belongs to the long (4 C-C) scorpion toxin superfamily. Sodium channel inhibitor family. Beta subfamily. As to expression, expressed by the venom gland.

The protein localises to the secreted. Functionally, excitatory insect beta-toxins induce a spastic paralysis. They bind voltage-independently at site-4 of sodium channels (Nav) and shift the voltage of activation toward more negative potentials thereby affecting sodium channel activation and promoting spontaneous and repetitive firing. In vivo, this toxin induces a fast excitatory contraction paralysis on fly larvae. It is active only on insects. This chain is Beta-insect excitatory toxin LqqIT1, found in Leiurus quinquestriatus quinquestriatus (Egyptian scorpion).